A 670-amino-acid chain; its full sequence is DNA ligase (670 aa).

NAD(+) contacts are provided by residues 33–37 (DVEYD), 82–83 (SL), and glutamate 114. Residue lysine 116 is the N6-AMP-lysine intermediate of the active site. Residues arginine 137, glutamate 174, lysine 291, and lysine 315 each contribute to the NAD(+) site. Residues cysteine 409, cysteine 412, cysteine 427, and cysteine 433 each contribute to the Zn(2+) site. Residues 593–670 (DQELPLEGKV…TEEDLIALIS (78 aa)) form the BRCT domain.

It belongs to the NAD-dependent DNA ligase family. LigA subfamily. It depends on Mg(2+) as a cofactor. The cofactor is Mn(2+).

The catalysed reaction is NAD(+) + (deoxyribonucleotide)n-3'-hydroxyl + 5'-phospho-(deoxyribonucleotide)m = (deoxyribonucleotide)n+m + AMP + beta-nicotinamide D-nucleotide.. In terms of biological role, DNA ligase that catalyzes the formation of phosphodiester linkages between 5'-phosphoryl and 3'-hydroxyl groups in double-stranded DNA using NAD as a coenzyme and as the energy source for the reaction. It is essential for DNA replication and repair of damaged DNA. This is DNA ligase from Vibrio atlanticus (strain LGP32) (Vibrio splendidus (strain Mel32)).